The following is a 152-amino-acid chain: MFRGATLVNLDSKGRLSVPTRYREQLLENAAGQMVCTIDIHHPCLLLYPLPEWEIIEQKLSRLSSTNPVERRVQRLLLGHASECQMDGAGRLLIAPVLRQHAGLTKEVMLVGQFNKFELWDETTWHQQVKEDIDAEQLATGDLSERLQDLSL.

2 consecutive SpoVT-AbrB domains span residues 5–52 (ATLV…PLPE) and 81–124 (ASEC…DETT).

The protein belongs to the MraZ family. In terms of assembly, forms oligomers.

The protein resides in the cytoplasm. It is found in the nucleoid. Functionally, negatively regulates its own expression and that of the subsequent genes in the proximal part of the division and cell wall (dcw) gene cluster. Acts by binding directly to DNA. May also regulate the expression of genes outside the dcw cluster. The polypeptide is Transcriptional regulator MraZ (Escherichia coli O127:H6 (strain E2348/69 / EPEC)).